The sequence spans 218 residues: Recombination protein RecR (218 aa).

The segment at 56–71 (CRICCNISREEVCRIC) adopts a C4-type zinc-finger fold. Positions 79–195 (GTICVVEEPK…VVSRLASGMP (117 aa)) constitute a Toprim domain.

This sequence belongs to the RecR family.

In terms of biological role, may play a role in DNA repair. It seems to be involved in an RecBC-independent recombinational process of DNA repair. It may act with RecF and RecO. The polypeptide is Recombination protein RecR (Corynebacterium glutamicum (strain R)).